The primary structure comprises 245 residues: Major prion protein (245 aa).

Positions 1–22 (MANLGCWMLVVFVATWSDLGLC) are cleaved as a signal peptide. The interval 23–222 (KKRPKPGGWN…ESQAYYQRGS (200 aa)) is interaction with GRB2, ERI3 and SYN1. Residues 25 to 102 (RPKPGGWNTG…KPSKPKTSMK (78 aa)) form a disordered region. 4 consecutive repeat copies span residues 51–59 (PQGGGGWGQ), 60–67 (PHGGGWGQ), 68–75 (PHGGGWGQ), and 76–83 (PHGGGWGQ). The interval 51-83 (PQGGGGWGQPHGGGWGQPHGGGWGQPHGGGWGQ) is 4 X 8 AA tandem repeats of P-H-G-G-G-W-G-Q. Residues 52–87 (QGGGGWGQPHGGGWGQPHGGGWGQPHGGGWGQGGGT) are compositionally biased toward gly residues. Cu(2+) is bound by residues G54, G55, H61, G62, G63, H69, G70, G71, H77, G78, and G79. Positions 90 to 101 (QWHKPSKPKTSM) are enriched in basic residues. A disulfide bridge connects residues C171 and C206. Residues N173 and N189 are each glycosylated (N-linked (GlcNAc...) asparagine). S222 carries the GPI-anchor amidated serine lipid modification. The propeptide at 223-245 (SMVLFSSPPVILLISFLIFLIVG) is removed in mature form.

It belongs to the prion family. In terms of assembly, monomer and homodimer. Has a tendency to aggregate into amyloid fibrils containing a cross-beta spine, formed by a steric zipper of superposed beta-strands. Soluble oligomers may represent an intermediate stage on the path to fibril formation. Copper binding may promote oligomerization. Interacts with GRB2, APP, ERI3/PRNPIP and SYN1. Mislocalized cytosolically exposed PrP interacts with MGRN1; this interaction alters MGRN1 subcellular location and causes lysosomal enlargement. Interacts with KIAA1191.

It localises to the cell membrane. The protein localises to the golgi apparatus. In terms of biological role, its primary physiological function is unclear. Has cytoprotective activity against internal or environmental stresses. May play a role in neuronal development and synaptic plasticity. May be required for neuronal myelin sheath maintenance. May play a role in iron uptake and iron homeostasis. Soluble oligomers are toxic to cultured neuroblastoma cells and induce apoptosis (in vitro). Association with GPC1 (via its heparan sulfate chains) targets PRNP to lipid rafts. Also provides Cu(2+) or Zn(2+) for the ascorbate-mediated GPC1 deaminase degradation of its heparan sulfate side chains. In Cercopithecus diana (Diana monkey), this protein is Major prion protein (PRNP).